Reading from the N-terminus, the 294-residue chain is Metallophosphoesterase MPPED2 (294 aa).

D65, H67, D86, N117, and H213 together coordinate Mn(2+). 117–118 (NH) serves as a coordination point for GMP. GMP-binding positions include 225–226 (KE) and 254–255 (HE). Residue H254 coordinates Mn(2+).

Belongs to the UPF0046 family. Homodimer. Mn(2+) is required as a cofactor. The cofactor is Co(2+). Expressed in fetal brain (at protein level). detected in fetal and adult brain.

Its activity is regulated as follows. Inhibited by nmolar levels of AMP and GMP. Functionally, displays low metallophosphoesterase activity (in vitro). May play a role in the development of the nervous system. The protein is Metallophosphoesterase MPPED2 (Mpped2) of Rattus norvegicus (Rat).